We begin with the raw amino-acid sequence, 333 residues long: DNA-3-methyladenine glycosylase (333 aa).

The span at 1–14 shows a compositional bias: low complexity; that stretch reads MPARGGSARPGRGA. Residues 1 to 42 are disordered; sequence MPARGGSARPGRGALKPVSVTLLPDTEQPPFLGRARRPGNAR. 2 positions are modified to phosphoserine: serine 98 and serine 272.

Belongs to the DNA glycosylase MPG family. As to quaternary structure, binds MBD1. Binds SSBP1.

It localises to the cytoplasm. The protein resides in the mitochondrion matrix. The protein localises to the mitochondrion nucleoid. Its subcellular location is the nucleus. It carries out the reaction Hydrolysis of alkylated DNA, releasing 3-methyladenine, 3-methylguanine, 7-methylguanine and 7-methyladenine.. Binding to SSBP1 in mitochondria inhibits glycosylase activity in the context of a single-stranded DNA (ssDNA), but not a double-stranded DNA (dsDNA) substrates. In terms of biological role, hydrolysis of the deoxyribose N-glycosidic bond to excise 3-methyladenine, and 7-methylguanine from the damaged DNA polymer formed by alkylation lesions. The sequence is that of DNA-3-methyladenine glycosylase (Mpg) from Mus musculus (Mouse).